The primary structure comprises 495 residues: B3 domain-containing protein Os01g0234100 (495 aa).

2 disordered regions span residues Met-1–Gln-25 and Pro-88–Glu-108. A compositionally biased stretch (polar residues) spans Gln-92–Glu-108. The segment at residues Phe-152–Lys-243 is a DNA-binding region (TF-B3). The segment covering Glu-268–Thr-282 has biased composition (basic and acidic residues). The tract at residues Glu-268 to Val-289 is disordered.

The protein localises to the nucleus. The protein is B3 domain-containing protein Os01g0234100 of Oryza sativa subsp. japonica (Rice).